Reading from the N-terminus, the 434-residue chain is Enolase (434 aa).

Residue Q163 participates in (2R)-2-phosphoglycerate binding. Catalysis depends on E205, which acts as the Proton donor. Mg(2+) contacts are provided by D242, E289, and D316. (2R)-2-phosphoglycerate is bound by residues K341, R370, S371, and K392. The active-site Proton acceptor is K341.

This sequence belongs to the enolase family. It depends on Mg(2+) as a cofactor.

It localises to the cytoplasm. Its subcellular location is the secreted. It is found in the cell surface. The catalysed reaction is (2R)-2-phosphoglycerate = phosphoenolpyruvate + H2O. Its pathway is carbohydrate degradation; glycolysis; pyruvate from D-glyceraldehyde 3-phosphate: step 4/5. Functionally, catalyzes the reversible conversion of 2-phosphoglycerate (2-PG) into phosphoenolpyruvate (PEP). It is essential for the degradation of carbohydrates via glycolysis. In Lacticaseibacillus casei (strain BL23) (Lactobacillus casei), this protein is Enolase.